We begin with the raw amino-acid sequence, 919 residues long: Lipoxygenase 3, chloroplastic (919 aa).

A chloroplast-targeting transit peptide spans 1-52 (MALAKELMGYPLITERSSLVSSASHFKKRTQSTQFSINPFDRRPRKTKSGVV). The PLAT domain occupies 86–222 (VRAVVTVRNK…DHPDKRIFFT (137 aa)). A Lipoxygenase domain is found at 225 to 919 (PYLPNETPSG…CRGVPNSVSI (695 aa)). Residues 272–310 (PDKSSELSRPKLGGKEVPYPRRCRTGRQSTVSDKDAESR) are disordered. 5 residues coordinate Fe cation: His-578, His-583, His-770, Asn-774, and Ile-919.

It belongs to the lipoxygenase family. Fe cation is required as a cofactor. Expressed in roots and leaves.

It is found in the plastid. Its subcellular location is the chloroplast. The catalysed reaction is (9Z,12Z)-octadecadienoate + O2 = (13S)-hydroperoxy-(9Z,11E)-octadecadienoate. The enzyme catalyses (9Z,12Z,15Z)-octadecatrienoate + O2 = (13S)-hydroperoxy-(9Z,11E,15Z)-octadecatrienoate. The protein operates within lipid metabolism; oxylipin biosynthesis. Its function is as follows. 13S-lipoxygenase that can use linolenic acid as substrates. Plant lipoxygenases may be involved in a number of diverse aspects of plant physiology including growth and development, pest resistance, and senescence or responses to wounding. Catalyzes the hydroperoxidation of lipids containing a cis,cis-1,4-pentadiene structure. The chain is Lipoxygenase 3, chloroplastic (LOX3) from Arabidopsis thaliana (Mouse-ear cress).